We begin with the raw amino-acid sequence, 247 residues long: ABC-type transporter ATP-binding protein EcsA (247 aa).

The ABC transporter domain maps to 4–234; that stretch reads LSVKDLTGGY…FGMKDAALDD (231 aa). 36–43 serves as a coordination point for ATP; the sequence is GLNGAGKS.

The protein belongs to the ABC transporter superfamily.

Has a role in exoprotein production, sporulation and competence. This chain is ABC-type transporter ATP-binding protein EcsA (ecsA), found in Bacillus subtilis (strain 168).